Here is a 714-residue protein sequence, read N- to C-terminus: Fatty acid oxidation complex subunit alpha (714 aa).

Residues 1-190 (MEMASAFTLN…KLGLVDDVVP (190 aa)) are enoyl-CoA hydratase. Residues 306 to 714 (APLNSVGILG…FWKTTATDLQ (409 aa)) are 3-hydroxyacyl-CoA dehydrogenase.

It in the N-terminal section; belongs to the enoyl-CoA hydratase/isomerase family. The protein in the central section; belongs to the 3-hydroxyacyl-CoA dehydrogenase family. Heterotetramer of two alpha chains (FadJ) and two beta chains (FadI).

It localises to the cytoplasm. The enzyme catalyses a (3S)-3-hydroxyacyl-CoA = a (2E)-enoyl-CoA + H2O. The catalysed reaction is a 4-saturated-(3S)-3-hydroxyacyl-CoA = a (3E)-enoyl-CoA + H2O. It catalyses the reaction a (3S)-3-hydroxyacyl-CoA + NAD(+) = a 3-oxoacyl-CoA + NADH + H(+). It carries out the reaction (3S)-3-hydroxybutanoyl-CoA = (3R)-3-hydroxybutanoyl-CoA. It participates in lipid metabolism; fatty acid beta-oxidation. Functionally, catalyzes the formation of a hydroxyacyl-CoA by addition of water on enoyl-CoA. Also exhibits 3-hydroxyacyl-CoA epimerase and 3-hydroxyacyl-CoA dehydrogenase activities. This chain is Fatty acid oxidation complex subunit alpha, found in Escherichia coli (strain SMS-3-5 / SECEC).